The primary structure comprises 44 residues: Thymosin beta-4 (44 aa).

The disordered stretch occupies residues Met1–Ser44. Ser2 is subject to N-acetylserine. Ser2 bears the Phosphoserine mark. Lys4 bears the N6-acetyllysine mark. Lys12 bears the N6-acetyllysine; alternate mark. Residue Lys12 forms a Glycyl lysine isopeptide (Lys-Gly) (interchain with G-Cter in SUMO2); alternate linkage. At Thr23 the chain carries Phosphothreonine. Position 26 is an N6-acetyllysine (Lys26). Ser31 is modified (phosphoserine). Lys32 is subject to N6-acetyllysine. Positions Glu33 to Ser44 are enriched in basic and acidic residues. A Phosphothreonine modification is found at Thr34. Position 39 is an N6-acetyllysine (Lys39).

Belongs to the thymosin beta family. As to quaternary structure, identified in a complex composed of ACTA1, COBL, GSN AND TMSB4X. Interacts with SERPINB1. Post-translationally, acSDKP is inactivated by ACE, which removes the dipeptide Lys-Pro from its C-terminus.

Its subcellular location is the cytoplasm. It is found in the cytoskeleton. Its function is as follows. Plays an important role in the organization of the cytoskeleton. Binds to and sequesters actin monomers (G actin) and therefore inhibits actin polymerization. Functionally, potent inhibitor of bone marrow derived stem cell differentiation. Acts by inhibits the entry of hematopoietic pluripotent stem cells into the S-phase. In Notamacropus eugenii (Tammar wallaby), this protein is Thymosin beta-4 (TMSB4).